The primary structure comprises 169 residues: Photosystem I assembly protein Ycf3 (169 aa).

TPR repeat units lie at residues 35–68 (AFTY…EIDP), 72–105 (SYIL…NPSL), and 120–153 (GEQA…APNN).

This sequence belongs to the Ycf3 family.

The protein localises to the plastid. Its subcellular location is the chloroplast thylakoid membrane. Functionally, essential for the assembly of the photosystem I (PSI) complex. May act as a chaperone-like factor to guide the assembly of the PSI subunits. In Staurastrum punctulatum (Green alga), this protein is Photosystem I assembly protein Ycf3.